The chain runs to 291 residues: Pyridoxal 5'-phosphate synthase subunit PdxS (291 aa).

D23 lines the D-ribose 5-phosphate pocket. Residue K80 is the Schiff-base intermediate with D-ribose 5-phosphate of the active site. G152 lines the D-ribose 5-phosphate pocket. A D-glyceraldehyde 3-phosphate-binding site is contributed by R164. Residues G213 and 234–235 (GS) each bind D-ribose 5-phosphate.

It belongs to the PdxS/SNZ family. In terms of assembly, in the presence of PdxT, forms a dodecamer of heterodimers.

The enzyme catalyses aldehydo-D-ribose 5-phosphate + D-glyceraldehyde 3-phosphate + L-glutamine = pyridoxal 5'-phosphate + L-glutamate + phosphate + 3 H2O + H(+). The protein operates within cofactor biosynthesis; pyridoxal 5'-phosphate biosynthesis. Its function is as follows. Catalyzes the formation of pyridoxal 5'-phosphate from ribose 5-phosphate (RBP), glyceraldehyde 3-phosphate (G3P) and ammonia. The ammonia is provided by the PdxT subunit. Can also use ribulose 5-phosphate and dihydroxyacetone phosphate as substrates, resulting from enzyme-catalyzed isomerization of RBP and G3P, respectively. In Bifidobacterium longum (strain NCC 2705), this protein is Pyridoxal 5'-phosphate synthase subunit PdxS.